A 475-amino-acid polypeptide reads, in one-letter code: Ankyrin repeat, SAM and basic leucine zipper domain-containing protein 1 (475 aa).

3 positions are modified to phosphoserine: S17, S18, and S20. 6 ANK repeats span residues 45–74 (EKNETFKKALTTGDISLVQELLDSGISVES), 78–107 (YGWTPLMYAASVSNVELVRVLLDRGANASF), 110–144 (DKQTILITACSARGSEEQILKCVELLLSRNADPNV), 148–177 (RLMTPIMYAARDGHPQVVALLVAHGAEVNS), 181–210 (NGYTALTWAARQGHKNVVLKLLELGANKML), and 214–243 (DGKTPSEIAKRNKHLEIFNFLSLTLNPLEG). The region spanning 272–334 (SYTAFGDLEI…KILAALKELE (63 aa)) is the SAM domain.

Interacts with DDX4, PIWIL1, RANBP9 and TDRD1.

The protein localises to the cytoplasm. Its function is as follows. Plays a central role during spermatogenesis by repressing transposable elements and preventing their mobilization, which is essential for the germline integrity. Acts via the piRNA metabolic process, which mediates the repression of transposable elements during meiosis by forming complexes composed of piRNAs and Piwi proteins and governs the methylation and subsequent repression of transposons. Its association with pi-bodies suggests a participation in the primary piRNAs metabolic process. Required prior to the pachytene stage to facilitate the production of multiple types of piRNAs, including those associated with repeats involved in the regulation of retrotransposons. May act by mediating protein-protein interactions during germ cell maturation. The chain is Ankyrin repeat, SAM and basic leucine zipper domain-containing protein 1 (ASZ1) from Mustela putorius furo (European domestic ferret).